A 286-amino-acid chain; its full sequence is Tryptophan 2,3-dioxygenase (286 aa).

Substrate-binding positions include 53–57 (FIVQH), Tyr-115, and Arg-119. Position 242 (His-242) interacts with heme. A substrate-binding site is contributed by Thr-256.

Belongs to the tryptophan 2,3-dioxygenase family. As to quaternary structure, homotetramer. It depends on heme as a cofactor.

The catalysed reaction is L-tryptophan + O2 = N-formyl-L-kynurenine. Its pathway is amino-acid degradation; L-tryptophan degradation via kynurenine pathway; L-kynurenine from L-tryptophan: step 1/2. Its function is as follows. Heme-dependent dioxygenase that catalyzes the oxidative cleavage of the L-tryptophan (L-Trp) pyrrole ring and converts L-tryptophan to N-formyl-L-kynurenine. Catalyzes the oxidative cleavage of the indole moiety. This chain is Tryptophan 2,3-dioxygenase, found in Kineococcus radiotolerans (strain ATCC BAA-149 / DSM 14245 / SRS30216).